The chain runs to 557 residues: MPDNRRSQTITQGAQRTPNRAMLRAVGFGDGDFDKPIVGVANGFSTITPCNMGLDTLAKCAEHALKTAGAMPQMFGTITVSDGISMGTEGMKYSLVSREVIADSIETCVQAESMDGVIAIGGCDKNMPGAMIALARLNVPSIFVYGGTIKPGHYQGRDLTIVSAFEAVGQHTAHKIDDHELLEVERHACPGAGSCGGMYTANTMSSAIEAMGMSLPYSSTMAAEDEEKRISAIRSAEVLVDAVKKQILPRSLITRKSIENAVSVVMAVGGSTNAVLHLLAIAHAAEVEFSIDDFEAIRARVPVLCDLKPSGRYVATDLHKAGGIPQVMKMLLVHDLLHGDCLTISGQTIAEVLKDIPEQPRADQDVIQPWDNPVYEQGHLAILKGNLSSEGAVAKISGIKNPSITGPARVFDSEETCMAAILERKIQPGDVVVIRYEGPQGGPGMREMLSPTSALIGEGLGDSVGLITDGRFSGGTYGMVVGHVAPEAFAGGTIALVQEGDSITIDAHRRLLQLNVPEAELERRRAAWHPPAPRYTRGVLAKYAKLVSTASRGAVTD.

Cysteine 50 is a [2Fe-2S] cluster binding site. Aspartate 82 is a binding site for Mg(2+). Cysteine 123 lines the [2Fe-2S] cluster pocket. Residues aspartate 124 and lysine 125 each coordinate Mg(2+). N6-carboxylysine is present on lysine 125. Residue cysteine 195 participates in [2Fe-2S] cluster binding. Glutamate 447 contributes to the Mg(2+) binding site. Serine 473 serves as the catalytic Proton acceptor.

It belongs to the IlvD/Edd family. In terms of assembly, homodimer. Requires [2Fe-2S] cluster as cofactor. The cofactor is Mg(2+).

The catalysed reaction is (2R)-2,3-dihydroxy-3-methylbutanoate = 3-methyl-2-oxobutanoate + H2O. It carries out the reaction (2R,3R)-2,3-dihydroxy-3-methylpentanoate = (S)-3-methyl-2-oxopentanoate + H2O. The protein operates within amino-acid biosynthesis; L-isoleucine biosynthesis; L-isoleucine from 2-oxobutanoate: step 3/4. Its pathway is amino-acid biosynthesis; L-valine biosynthesis; L-valine from pyruvate: step 3/4. Functions in the biosynthesis of branched-chain amino acids. Catalyzes the dehydration of (2R,3R)-2,3-dihydroxy-3-methylpentanoate (2,3-dihydroxy-3-methylvalerate) into 2-oxo-3-methylpentanoate (2-oxo-3-methylvalerate) and of (2R)-2,3-dihydroxy-3-methylbutanoate (2,3-dihydroxyisovalerate) into 2-oxo-3-methylbutanoate (2-oxoisovalerate), the penultimate precursor to L-isoleucine and L-valine, respectively. This Nitrosomonas europaea (strain ATCC 19718 / CIP 103999 / KCTC 2705 / NBRC 14298) protein is Dihydroxy-acid dehydratase.